Here is a 490-residue protein sequence, read N- to C-terminus: tRNA-2-methylthio-N(6)-dimethylallyladenosine synthase (490 aa).

The region spanning 37–154 (KKVYIATQGC…LPELYDKSTT (118 aa)) is the MTTase N-terminal domain. Positions 46, 83, 117, 198, 202, and 205 each coordinate [4Fe-4S] cluster. Residues 184–416 (KVEGYRAFVS…QKVIRDSTLK (233 aa)) form the Radical SAM core domain. Residues 419-487 (EEMVGKTLRV…PHMVRGELVD (69 aa)) form the TRAM domain.

It belongs to the methylthiotransferase family. MiaB subfamily. In terms of assembly, monomer. It depends on [4Fe-4S] cluster as a cofactor.

Its subcellular location is the cytoplasm. It carries out the reaction N(6)-dimethylallyladenosine(37) in tRNA + (sulfur carrier)-SH + AH2 + 2 S-adenosyl-L-methionine = 2-methylsulfanyl-N(6)-dimethylallyladenosine(37) in tRNA + (sulfur carrier)-H + 5'-deoxyadenosine + L-methionine + A + S-adenosyl-L-homocysteine + 2 H(+). Functionally, catalyzes the methylthiolation of N6-(dimethylallyl)adenosine (i(6)A), leading to the formation of 2-methylthio-N6-(dimethylallyl)adenosine (ms(2)i(6)A) at position 37 in tRNAs that read codons beginning with uridine. This is tRNA-2-methylthio-N(6)-dimethylallyladenosine synthase from Psychrobacter sp. (strain PRwf-1).